The primary structure comprises 360 residues: MDFSTNGSEESELYHAQIHLYKHVYNFVSSMALKSAMELGIADAIHNHGKPMTLPELSSSLKLHPSKVNILYRFLRLLTHNGFFAKTTVKSNEGEEETAYVLTPSSKLLVSGKSTCLSSLVKGALHPSSLDMWGVSKKWFHEDKEQTLFECATGENYWDFLNKDSDSLSMFQDAMAADSRLFKLAIQENKHVFEGLESLVDVAGGTGGVAKLIHEAFPHIKCTVFDQPQVVGNLTGNENLNFVGGDMFKSVPSADAVLLKWVLHDWNDELSLKILKNSKEAISHKGKDGKVIIIDISIDENSDDRGLTELQLEYDVVMLTMFLGKERTKKEWEKLIYDAGFSRYKITPICGFKSLIEVYP.

Residues 202–205, Asp226, 226–227, 246–247, and Lys260 each bind S-adenosyl-L-methionine; these read VAGG, DQ, and DM. Catalysis depends on His264, which acts as the Proton acceptor.

Belongs to the class I-like SAM-binding methyltransferase superfamily. Cation-independent O-methyltransferase family. COMT subfamily.

The catalysed reaction is (+)-6a-hydroxymaackiain + S-adenosyl-L-methionine = (+)-pisatin + S-adenosyl-L-homocysteine + H(+). The enzyme catalyses a 4'-hydroxyisoflavone + S-adenosyl-L-methionine = a 4'-methoxyisoflavone + S-adenosyl-L-homocysteine + H(+). In terms of biological role, methyltransferase involved in the phytoalexin pisatin biosynthesis. Has both 3- and 4'-O-methyltransferase activities. Can use (+)-6a-hydroxymaackiain, 2,7,4'-trihydroxyisoflavanone and with much less activity (+)-medicarpin as substrates, but not (-)-6a-hydroxymaackiain, daidzein, formononetin or isoliquiritigenin. May be involved in formononetin biosynthesis. The sequence is that of (+)-6a-hydroxymaackiain 3-O-methyltransferase 1 (HMM1) from Pisum sativum (Garden pea).